The primary structure comprises 189 residues: Acireductone dioxygenase 1 (189 aa).

Residues H102, H104, E108, and H146 each contribute to the Fe(2+) site. 4 residues coordinate Ni(2+): H102, H104, E108, and H146.

This sequence belongs to the acireductone dioxygenase (ARD) family. In terms of assembly, monomer. The cofactor is Fe(2+). Requires Ni(2+) as cofactor.

The enzyme catalyses 1,2-dihydroxy-5-(methylsulfanyl)pent-1-en-3-one + O2 = 3-(methylsulfanyl)propanoate + CO + formate + 2 H(+). It carries out the reaction 1,2-dihydroxy-5-(methylsulfanyl)pent-1-en-3-one + O2 = 4-methylsulfanyl-2-oxobutanoate + formate + 2 H(+). The protein operates within amino-acid biosynthesis; L-methionine biosynthesis via salvage pathway; L-methionine from S-methyl-5-thio-alpha-D-ribose 1-phosphate: step 5/6. In terms of biological role, catalyzes 2 different reactions between oxygen and the acireductone 1,2-dihydroxy-3-keto-5-methylthiopentene (DHK-MTPene) depending upon the metal bound in the active site. Fe-containing acireductone dioxygenase (Fe-ARD) produces formate and 2-keto-4-methylthiobutyrate (KMTB), the alpha-ketoacid precursor of methionine in the methionine recycle pathway. Ni-containing acireductone dioxygenase (Ni-ARD) produces methylthiopropionate, carbon monoxide and formate, and does not lie on the methionine recycle pathway. The sequence is that of Acireductone dioxygenase 1 from Nocardia farcinica (strain IFM 10152).